Reading from the N-terminus, the 595-residue chain is Coagulation factor XII (595 aa).

The N-terminal stretch at 1–19 is a signal peptide; it reads MTALLFLGSLLMSLDLTLS. The 49-residue stretch at 41–89 folds into the Fibronectin type-II domain; that stretch reads VDGKLCHFPFQYHRRLYHKCIHKGQPGSRPWCATTPNFDEDQQWGYCLE. Intrachain disulfides connect C46–C72, C60–C87, C97–C109, C103–C118, C120–C129, C134–C162, C160–C169, C177–C188, C182–C197, C199–C208, C216–C294, C237–C276, and C265–C289. The region spanning 93–130 is the EGF-like 1 domain; sequence VKDHCSKHSPCHKGGTCVNTPNGPHCLCPEHLTGKHCQ. T108 is a glycosylation site (O-linked (Fuc) threonine). Residues 132 to 172 enclose the Fibronectin type-I domain; that stretch reads EKCFESQLLKFFHENEIWFRTGPGGVARCQCKGPQAVCKLL. One can recognise an EGF-like 2 domain in the interval 173-209; the sequence is TSQVCRVNPCLNGGTCLLVEDHRLCHCPAGYAGPFCD. The 80-residue stretch at 215–294 folds into the Kringle domain; it reads TCYEDRGLSY…SWDYCDLEQC (80 aa). The N-linked (GlcNAc...) asparagine glycan is linked to N248. T298 is a glycosylation site (O-linked (GalNAc...) threonine). The segment at 302-332 is disordered; sequence PVSPESHDMLKPRPPILQSSPRDSTRNQNVV. An O-linked (GalNAc...) serine glycan is attached at S307. Polar residues predominate over residues 318–332; it reads LQSSPRDSTRNQNVV. O-linked (GalNAc...) threonine glycosylation occurs at T326. 7 cysteine pairs are disulfide-bonded: C340/C466, C378/C394, C386/C455, C417/C420, C480/C549, C512/C528, and C539/C570. A Peptidase S1 domain is found at 354–594; sequence VVGGLVALPG…YLDWIQEHTA (241 aa). The Charge relay system role is filled by H393. N414 is a glycosylation site (N-linked (GlcNAc...) asparagine). D442 (charge relay system) is an active-site residue. Residue S543 is the Charge relay system of the active site.

The protein belongs to the peptidase S1 family. As to quaternary structure, interacts with HRG; the interaction, which is enhanced in the presence of zinc ions and inhibited by heparin-binding, inhibits factor XII autoactivation and contact-initiated coagulation. O- and N-glycosylated.

Its subcellular location is the secreted. The enzyme catalyses Selective cleavage of Arg-|-Ile bonds in factor VII to form factor VIIa and factor XI to form factor XIa.. Its activity is regulated as follows. Activity is promoted in the presence of negatively charged surfaces. Functionally, factor XII is a serum glycoprotein that participates in the initiation of blood coagulation, fibrinolysis, and the generation of bradykinin and angiotensin. Prekallikrein is cleaved by factor XII to form kallikrein, which then cleaves factor XII first to alpha-factor XIIa and then trypsin cleaves it to beta-factor XIIa. Alpha-factor XIIa activates factor XI to factor XIa. This Rattus norvegicus (Rat) protein is Coagulation factor XII (F12).